A 1227-amino-acid polypeptide reads, in one-letter code: DNA-directed RNA polymerase subunit beta (1227 aa).

This sequence belongs to the RNA polymerase beta chain family. As to quaternary structure, the RNAP catalytic core consists of 2 alpha, 1 beta, 1 beta' and 1 omega subunit. When a sigma factor is associated with the core the holoenzyme is formed, which can initiate transcription.

The enzyme catalyses RNA(n) + a ribonucleoside 5'-triphosphate = RNA(n+1) + diphosphate. DNA-dependent RNA polymerase catalyzes the transcription of DNA into RNA using the four ribonucleoside triphosphates as substrates. This chain is DNA-directed RNA polymerase subunit beta, found in Chloroflexus aggregans (strain MD-66 / DSM 9485).